Here is a 111-residue protein sequence, read N- to C-terminus: Probable 4-amino-4-deoxy-L-arabinose-phosphoundecaprenol flippase subunit ArnE (111 aa).

Topologically, residues 1–35 are cytoplasmic; sequence MIWLTLVFASLLSVAGQLCQKQATCFAAVNKRRKH. A helical membrane pass occupies residues 36–56; it reads IVLWLGLALACLGLAMVLWLL. The region spanning 40-109 is the EamA domain; sequence LGLALACLGL…IIGGIVILGS (70 aa). Residues 57–60 lie on the Periplasmic side of the membrane; the sequence is VLQN. The helical transmembrane segment at 61–81 threads the bilayer; it reads VPVGIAYPMLSLNFVWVTLAA. The Cytoplasmic segment spans residues 82–87; the sequence is VKLWHE. Residues 88-108 traverse the membrane as a helical segment; that stretch reads PVSLRHWCGLAFIIGGIVILG. Topologically, residues 109-111 are periplasmic; that stretch reads STV.

The protein belongs to the ArnE family. Heterodimer of ArnE and ArnF.

It is found in the cell inner membrane. It participates in bacterial outer membrane biogenesis; lipopolysaccharide biosynthesis. Translocates 4-amino-4-deoxy-L-arabinose-phosphoundecaprenol (alpha-L-Ara4N-phosphoundecaprenol) from the cytoplasmic to the periplasmic side of the inner membrane. The protein is Probable 4-amino-4-deoxy-L-arabinose-phosphoundecaprenol flippase subunit ArnE of Escherichia coli O81 (strain ED1a).